Consider the following 238-residue polypeptide: MSSQICRSASKAAKSLLSSAKNARFFSEGRAIGAAAAVSASGKIPLYASNFARSSGSGVASKSWITGLLALPAAAYMIQDQEVLAAEMERTFIAIKPDGVQRGLISEIISRFERKGFKLVGIKVIVPSKDFAQKHYHDLKERPFFNGLCDFLSSGPVIAMVWEGDGVIRYGRKLIGATDPQKSEPGTIRGDLAVTVGRNIIHGSDGPETAKDEISLWFKPQELVSYTSNSEKWLYGDN.

Residues 1–85 (MSSQICRSAS…YMIQDQEVLA (85 aa)) constitute a chloroplast and mitochondrion transit peptide. Residues lysine 96, phenylalanine 144, arginine 172, threonine 178, arginine 189, and asparagine 199 each contribute to the ATP site. The active-site Pros-phosphohistidine intermediate is histidine 202.

It belongs to the NDK family. In terms of assembly, homohexamer. Mg(2+) serves as cofactor.

It is found in the plastid. Its subcellular location is the chloroplast thylakoid lumen. It localises to the mitochondrion intermembrane space. It carries out the reaction a 2'-deoxyribonucleoside 5'-diphosphate + ATP = a 2'-deoxyribonucleoside 5'-triphosphate + ADP. The enzyme catalyses a ribonucleoside 5'-diphosphate + ATP = a ribonucleoside 5'-triphosphate + ADP. Functionally, major role in the synthesis of nucleoside triphosphates other than ATP. The ATP gamma phosphate is transferred to the NDP beta phosphate via a ping-pong mechanism, using a phosphorylated active-site intermediate. Shows the highest specificity towards GDP. This Arabidopsis thaliana (Mouse-ear cress) protein is Nucleoside diphosphate kinase III, chloroplastic/mitochondrial (NDPK3).